Here is a 248-residue protein sequence, read N- to C-terminus: Adenosylcobinamide-GDP ribazoletransferase (248 aa).

Transmembrane regions (helical) follow at residues 24–44, 70–90, 106–126, 134–154, 168–188, 189–209, and 228–248; these read EINLKKGSALLPFVGVIIGAW, VIITGGFHVDALADTADGLFS, VGANGVIAICFYFLFYGALFL, ICWLFFVLPIVAKGVTMLLFA, IFLGVPWWPIVIAQVIVLAVL, GLFFSYVGVIAYVGVILFTII, and AGGQMGQLICLFCLVLLWGLV.

This sequence belongs to the CobS family. Mg(2+) serves as cofactor.

The protein resides in the cell membrane. It catalyses the reaction alpha-ribazole + adenosylcob(III)inamide-GDP = adenosylcob(III)alamin + GMP + H(+). It carries out the reaction alpha-ribazole 5'-phosphate + adenosylcob(III)inamide-GDP = adenosylcob(III)alamin 5'-phosphate + GMP + H(+). It functions in the pathway cofactor biosynthesis; adenosylcobalamin biosynthesis; adenosylcobalamin from cob(II)yrinate a,c-diamide: step 7/7. Its function is as follows. Joins adenosylcobinamide-GDP and alpha-ribazole to generate adenosylcobalamin (Ado-cobalamin). Also synthesizes adenosylcobalamin 5'-phosphate from adenosylcobinamide-GDP and alpha-ribazole 5'-phosphate. The protein is Adenosylcobinamide-GDP ribazoletransferase of Listeria monocytogenes serovar 1/2a (strain ATCC BAA-679 / EGD-e).